We begin with the raw amino-acid sequence, 61 residues long: Large ribosomal subunit protein uL30 (61 aa).

This sequence belongs to the universal ribosomal protein uL30 family. In terms of assembly, part of the 50S ribosomal subunit.

The polypeptide is Large ribosomal subunit protein uL30 (Corynebacterium urealyticum (strain ATCC 43042 / DSM 7109)).